A 1148-amino-acid polypeptide reads, in one-letter code: Signal transducer and activator of transcription B (1148 aa).

Positions 1–36 are enriched in low complexity; that stretch reads MEVTNNGSNNSSTIASTNPPTSPSTTSTSKSLPPLS. Disordered stretches follow at residues 1–81, 93–178, 268–312, 403–425, and 453–645; these read MEVT…NNNN, SSSN…LSSS, NTNN…PSNG, KNNI…NSLL, and YDYN…KTVT. Over residues 37–47 the composition is skewed to polar residues; it reads FLNSQWENKQS. Low complexity-rich tracts occupy residues 48–81, 106–178, and 268–298; these read NNNN…NNNN, NNNN…LSSS, and NTNN…NNNN. A compositionally biased stretch (low complexity) spans 466-517; the sequence is SNSSNNNSSNNNSNNNNNNNSNNNNNIIGSISPPHSSQLQQVSSPQQQQQQQ. Over residues 525–541 the composition is skewed to polar residues; the sequence is SISSGSIKDLINSPNKE. Low complexity predominate over residues 544-557; that stretch reads SKSQYPSSLSQSSS. Acidic residues predominate over residues 561–572; the sequence is MDTDVDSTDEFD. Low complexity predominate over residues 574-610; it reads GSNSNNNNNNNNNNNNNNNSNNSNNKKRNNSNNNNLG. The SH2 domain maps to 997–1122; that stretch reads WQNGFIFMFL…TIPVFKREPK (126 aa).

This sequence belongs to the transcription factor STAT family. In terms of assembly, homodimer. Does not form heterodimers with other family members.

It is found in the nucleus. Functionally, transcription factor that regulates gene expression during development. Required for optimal cell growth. This chain is Signal transducer and activator of transcription B (dstB), found in Dictyostelium discoideum (Social amoeba).